The primary structure comprises 2207 residues: DNA polymerase epsilon catalytic subunit A (2207 aa).

Disordered regions lie at residues 1–20 (MPSR…AASF), 1201–1233 (SMEK…PFAS), and 1934–1961 (RPES…ENEE). 4 residues coordinate Zn(2+): C2075, C2078, C2113, and C2116. The CysA-type zinc-finger motif lies at 2075-2116 (CSACCLIRDLDLCRDEDVLPERGSGSGPDSATSSRPWCCPFC). Positions 2147, 2150, 2162, and 2164 each coordinate [4Fe-4S] cluster. The CysB motif motif lies at 2147–2164 (CSKCGTLKISEFMEHCSC).

The protein belongs to the DNA polymerase type-B family. As to quaternary structure, heterotetramer. Consists of 4 subunits: pol2, dpb2, dpb3 and dpb4. [4Fe-4S] cluster is required as a cofactor.

It is found in the nucleus. The catalysed reaction is DNA(n) + a 2'-deoxyribonucleoside 5'-triphosphate = DNA(n+1) + diphosphate. In terms of biological role, DNA polymerase II participates in chromosomal DNA replication. This Emericella nidulans (strain FGSC A4 / ATCC 38163 / CBS 112.46 / NRRL 194 / M139) (Aspergillus nidulans) protein is DNA polymerase epsilon catalytic subunit A (pol2).